A 311-amino-acid polypeptide reads, in one-letter code: Zeta-sarcoglycan (311 aa).

Topologically, residues 1-50 (MDRSTDLDIQELKMTREQYILATQQNNLPRPENAQLYPVGIYGWRKRCLY) are cytoplasmic. Residues 51–71 (FFVLLLLVTMIVNLAMTIWIL) traverse the membrane as a helical; Signal-anchor for type II membrane protein segment. The Extracellular portion of the chain corresponds to 72–311 (KVMNFTVDGM…QSSSSICLWN (240 aa)). N-linked (GlcNAc...) asparagine glycans are attached at residues Asn-75 and Asn-123. Cysteines 285 and 301 form a disulfide.

It belongs to the sarcoglycan beta/delta/gamma/zeta family. Expressed in the heart, skeletal muscle and arterial vascular smooth muscle.

Its subcellular location is the cell membrane. It is found in the sarcolemma. The protein resides in the cytoplasm. It localises to the cytoskeleton. Functionally, component of the sarcoglycan complex, a subcomplex of the dystrophin-glycoprotein complex which forms a link between the F-actin cytoskeleton and the extracellular matrix. May play a role in the maintenance of striated muscle membrane stability. This Mus musculus (Mouse) protein is Zeta-sarcoglycan (Sgcz).